We begin with the raw amino-acid sequence, 630 residues long: Biosynthetic arginine decarboxylase (630 aa).

Lysine 99 is modified (N6-(pyridoxal phosphate)lysine). 281-291 (VDIGGGLGVDY) contributes to the substrate binding site.

Belongs to the Orn/Lys/Arg decarboxylase class-II family. SpeA subfamily. Mg(2+) is required as a cofactor. Requires pyridoxal 5'-phosphate as cofactor.

The enzyme catalyses L-arginine + H(+) = agmatine + CO2. The protein operates within amine and polyamine biosynthesis; agmatine biosynthesis; agmatine from L-arginine: step 1/1. Functionally, catalyzes the biosynthesis of agmatine from arginine. In Bacteroides fragilis (strain ATCC 25285 / DSM 2151 / CCUG 4856 / JCM 11019 / LMG 10263 / NCTC 9343 / Onslow / VPI 2553 / EN-2), this protein is Biosynthetic arginine decarboxylase.